Reading from the N-terminus, the 330-residue chain is uncharacterized protein (330 aa).

A run of 10 helical transmembrane segments spans residues 15–35 (LTLIAPFFLWGTAMVAMKGVL), 41–61 (FFVATVRLIPAGILVLLWAMG), 72–92 (GWGWIILFALVDGTLFQGFLA), 102–122 (LGSVIIDSQPIAVALLSSWLF), 125–145 (VIGGIGWLGLLLGVGGISLIG), 175–195 (LWMLLASLSMAVGTVLIPFVS), 201–221 (VVATGWHMIIGGLPLLAIALV), 238–258 (LAYATVFGSAIAYGIFFYLAS), 264–284 (SLSSLTFLTPIFALSFSNLIL), and 286–306 (EQLSSLQWLGVAFTLVSIYLI). EamA domains follow at residues 22–146 (FLWG…LIGL) and 182–308 (LSMA…LINQ).

This sequence belongs to the EamA transporter family.

Its subcellular location is the cell membrane. This is an uncharacterized protein from Synechocystis sp. (strain ATCC 27184 / PCC 6803 / Kazusa).